A 202-amino-acid polypeptide reads, in one-letter code: Protein-methionine-sulfoxide reductase heme-binding subunit MsrQ (202 aa).

The next 6 helical transmembrane spans lie at 8 to 28 (YAWL…FLLW), 50 to 70 (LALI…WLGW), 76 to 96 (IRKA…GIYL), 114 to 134 (PFIT…LTSG), 148 to 168 (LLHR…WWGV), and 174 to 194 (GPLL…KTPA).

This sequence belongs to the MsrQ family. As to quaternary structure, heterodimer of a catalytic subunit (MsrP) and a heme-binding subunit (MsrQ). FMN is required as a cofactor. The cofactor is heme b.

Its subcellular location is the cell membrane. In terms of biological role, part of the MsrPQ system that repairs oxidized cell envelope proteins containing methionine sulfoxide residues (Met-O), using respiratory chain electrons. Thus protects these proteins from oxidative-stress damage caused by reactive species of oxygen and chlorine. MsrPQ is essential for the maintenance of envelope integrity under bleach stress, rescuing a wide series of structurally unrelated cell envelope proteins from methionine oxidation. MsrQ provides electrons for reduction to the reductase catalytic subunit MsrP, using the quinone pool of the respiratory chain. This chain is Protein-methionine-sulfoxide reductase heme-binding subunit MsrQ, found in Deinococcus radiodurans (strain ATCC 13939 / DSM 20539 / JCM 16871 / CCUG 27074 / LMG 4051 / NBRC 15346 / NCIMB 9279 / VKM B-1422 / R1).